We begin with the raw amino-acid sequence, 536 residues long: Putative lipase ATG15 (536 aa).

Topologically, residues 1-8 are cytoplasmic; it reads MGNPTLMR. Residues 9–31 traverse the membrane as a helical; Signal-anchor for type II membrane protein segment; that stretch reads WPVTRILVLGLVVTVLYKAMAIY. The Lumenal portion of the chain corresponds to 32-536; that stretch reads SSRRAPVQVC…YCLEYGPELR (505 aa). N-linked (GlcNAc...) asparagine glycans are attached at residues Asn152, Asn187, and Asn293. Ser309 (charge relay system) is an active-site residue. N-linked (GlcNAc...) asparagine glycosylation is found at Asn426 and Asn516.

The protein belongs to the AB hydrolase superfamily. Lipase family. In terms of assembly, binds to both phosphatidylinositol (PI) and phosphatidylinositol 3,5-bisphosphate (PIP2).

It is found in the endosome. Its subcellular location is the multivesicular body membrane. The protein localises to the prevacuolar compartment membrane. The catalysed reaction is a triacylglycerol + H2O = a diacylglycerol + a fatty acid + H(+). In terms of biological role, lipase which is essential for lysis of subvacuolar cytoplasm to vacuole targeted bodies and intravacuolar autophagic bodies. Involved in the lysis of intravacuolar multivesicular body (MVB) vesicles. The intravacuolar membrane disintegration by ATG15 is critical to life span extension. In Pichia angusta (Yeast), this protein is Putative lipase ATG15 (ATG15).